Here is a 108-residue protein sequence, read N- to C-terminus: Transcription factor S (108 aa).

Residues cysteine 5, cysteine 8, cysteine 21, cysteine 24, cysteine 69, cysteine 72, cysteine 97, and cysteine 100 each coordinate Zn(2+). Residues cysteine 5–cysteine 24 form a C4-type zinc finger. The segment at threonine 65 to arginine 105 adopts a TFIIS-type zinc-finger fold.

It belongs to the archaeal RpoM/eukaryotic RPA12/RPB9/RPC11 RNA polymerase family.

In terms of biological role, induces RNA cleavage activity in the RNA polymerase. In its presence, the cleavage activity of the RNA polymerase truncates the RNA back to position +15 in a stepwise manner by releasing mainly dinucleotides from the 3'-end of the nascent RNA. The truncated RNAs are able to continue elongation. Involved in transcriptional proofreading and fidelity. Misincorporation of nucleotides during elongation of transcription leads to arrested elongation complexes which are rescued by TFS-promoted removal of a dinucleotide from the 3'-end. TFS is able to induce a cleavage resynthesis cycle in stalled elongation complexes (resulting from the next missing nucleotide or a reduced incorporation rate of a wrong nucleotide) preventing misincorporation and enabling proofreading in a post-incorporation manner. Pausing of elongation complexes is the main determinant of TFS-induced RNA cleavage. The protein is Transcription factor S of Methanocaldococcus jannaschii (strain ATCC 43067 / DSM 2661 / JAL-1 / JCM 10045 / NBRC 100440) (Methanococcus jannaschii).